The primary structure comprises 154 residues: Probable cyclic pyranopterin monophosphate synthase (154 aa).

Residues 74 to 76 (LCH) and 110 to 111 (ME) each bind substrate. Residue Asp-125 is part of the active site.

The protein belongs to the MoaC family. In terms of assembly, homohexamer; trimer of dimers.

The enzyme catalyses (8S)-3',8-cyclo-7,8-dihydroguanosine 5'-triphosphate = cyclic pyranopterin phosphate + diphosphate. Its pathway is cofactor biosynthesis; molybdopterin biosynthesis. Functionally, catalyzes the conversion of (8S)-3',8-cyclo-7,8-dihydroguanosine 5'-triphosphate to cyclic pyranopterin monophosphate (cPMP). The protein is Probable cyclic pyranopterin monophosphate synthase of Methanosphaerula palustris (strain ATCC BAA-1556 / DSM 19958 / E1-9c).